A 334-amino-acid polypeptide reads, in one-letter code: Ferredoxin--NADP reductase (334 aa).

FAD contacts are provided by D32, Q40, Y45, V85, F120, D287, and T327.

It belongs to the ferredoxin--NADP reductase type 2 family. Homodimer. FAD is required as a cofactor.

The enzyme catalyses 2 reduced [2Fe-2S]-[ferredoxin] + NADP(+) + H(+) = 2 oxidized [2Fe-2S]-[ferredoxin] + NADPH. In Wolbachia pipientis subsp. Culex pipiens (strain wPip), this protein is Ferredoxin--NADP reductase.